Reading from the N-terminus, the 214-residue chain is Probable transaldolase (214 aa).

Lys83 serves as the catalytic Schiff-base intermediate with substrate.

It belongs to the transaldolase family. Type 3B subfamily.

The protein localises to the cytoplasm. The enzyme catalyses D-sedoheptulose 7-phosphate + D-glyceraldehyde 3-phosphate = D-erythrose 4-phosphate + beta-D-fructose 6-phosphate. It functions in the pathway carbohydrate degradation; pentose phosphate pathway; D-glyceraldehyde 3-phosphate and beta-D-fructose 6-phosphate from D-ribose 5-phosphate and D-xylulose 5-phosphate (non-oxidative stage): step 2/3. Transaldolase is important for the balance of metabolites in the pentose-phosphate pathway. The protein is Probable transaldolase of Dictyoglomus turgidum (strain DSM 6724 / Z-1310).